The following is a 379-amino-acid chain: ATP-sensitive inward rectifier potassium channel 10 (379 aa).

Residues 1-61 (MTSVAKVYYS…LKDLWTTFID (61 aa)) lie on the Cytoplasmic side of the membrane. Arg-36 is a 1,2-dioctanoyl-sn-glycero-3-phospho-(1D-myo-inositol-4,5-bisphosphate) binding site. The helical transmembrane segment at 62 to 88 (MQWRYKLLLFSATFAGTWFLFGVVWYL) threads the bilayer. Residues 89–114 (VAVAHGDLLELGPPANHTPCVVQVHT) are Extracellular-facing. A disulfide bridge links Cys-108 with Cys-140. The discontinuously helical; Pore-forming intramembrane region spans 115–131 (LTGAFLFSLESQTTIGY). Positions 128 to 133 (TIGYGF) match the Selectivity filter motif. Topologically, residues 132 to 140 (GFRYISEEC) are extracellular. Residues 141–166 (PLAIVLLIAQLVLTTILEIFITGTFL) traverse the membrane as a helical segment. Over 167–379 (AKIARPKKRA…SALSVRISNV (213 aa)) the chain is Cytoplasmic. The 1,2-dioctanoyl-sn-glycero-3-phospho-(1D-myo-inositol-4,5-bisphosphate) site is built by Lys-168, Arg-171, and Lys-173. An ATP-binding site is contributed by 210 to 217 (GCQVTGKL).

It belongs to the inward rectifier-type potassium channel (TC 1.A.2.1) family. KCNJ10 subfamily. In terms of assembly, homotetramer. In kidney cells, it forms heteromeric channels with Kir5.1/KCNJ16; this interaction is required for KCNJ16 localization to the basolateral membrane. Interacts with MAGI1, alone and possibly as a heteromer with KCNJ16; this interaction may facilitate KCNJ10/KCNJ16 potassium channel expression at the basolateral membrane in kidney cells. Interacts with PATJ. In terms of tissue distribution, widely expressed in adult brain, including in the neocortex, the stratum pyrimadale of the hippocampus and the piriform cortex. Expressed by cultured astrocytes and also by cocultured cortical neurons (at protein level). In the distal segment of the nephron, expressed in the distal convoluted tubule, the connecting tubule, and the early cortical collecting duct.

It localises to the membrane. The protein resides in the basolateral cell membrane. The enzyme catalyses K(+)(in) = K(+)(out). Channel activity is strongly regulated by variations of cytosolic pH; channels are activated by alkaline and inhibited by acidic pH values. Activated by phosphatidylinositol 4,5 biphosphate (PtdIns(4,5)P2). Inhibited by Ba(2+) and Cs(+). May be responsible for potassium buffering action of glial cells in the brain. Inward rectifier potassium channels are characterized by a greater tendency to allow potassium to flow into the cell rather than out of it. Their voltage dependence is regulated by the concentration of extracellular potassium; as external potassium is raised, the voltage range of the channel opening shifts to more positive voltages. The inward rectification is mainly due to the blockage of outward current by internal magnesium. Can be blocked by extracellular barium and cesium. In the kidney, together with KCNJ16, mediates basolateral K(+) recycling in distal tubules; this process is critical for Na(+) reabsorption at the tubules. The polypeptide is ATP-sensitive inward rectifier potassium channel 10 (Mus musculus (Mouse)).